We begin with the raw amino-acid sequence, 632 residues long: tRNA uridine 5-carboxymethylaminomethyl modification enzyme MnmG (632 aa).

FAD-binding positions include 15 to 20 (GAGHAG), I127, and S182. 276–290 (GPRYCPSIEDKIVRF) is an NAD(+) binding site. Q373 provides a ligand contact to FAD.

The protein belongs to the MnmG family. In terms of assembly, homodimer. Heterotetramer of two MnmE and two MnmG subunits. FAD serves as cofactor.

The protein localises to the cytoplasm. Its function is as follows. NAD-binding protein involved in the addition of a carboxymethylaminomethyl (cmnm) group at the wobble position (U34) of certain tRNAs, forming tRNA-cmnm(5)s(2)U34. The sequence is that of tRNA uridine 5-carboxymethylaminomethyl modification enzyme MnmG from Streptococcus pyogenes serotype M12 (strain MGAS2096).